Here is a 196-residue protein sequence, read N- to C-terminus: ATP-dependent Clp protease proteolytic subunit (196 aa).

The active-site Nucleophile is the serine 98. Residue histidine 123 is part of the active site.

The protein belongs to the peptidase S14 family. As to quaternary structure, fourteen ClpP subunits assemble into 2 heptameric rings which stack back to back to give a disk-like structure with a central cavity, resembling the structure of eukaryotic proteasomes.

Its subcellular location is the cytoplasm. The catalysed reaction is Hydrolysis of proteins to small peptides in the presence of ATP and magnesium. alpha-casein is the usual test substrate. In the absence of ATP, only oligopeptides shorter than five residues are hydrolyzed (such as succinyl-Leu-Tyr-|-NHMec, and Leu-Tyr-Leu-|-Tyr-Trp, in which cleavage of the -Tyr-|-Leu- and -Tyr-|-Trp bonds also occurs).. Functionally, cleaves peptides in various proteins in a process that requires ATP hydrolysis. Has a chymotrypsin-like activity. Plays a major role in the degradation of misfolded proteins. This Geobacillus thermodenitrificans (strain NG80-2) protein is ATP-dependent Clp protease proteolytic subunit.